We begin with the raw amino-acid sequence, 216 residues long: Protein E4.2 (216 aa).

In Pantherophis guttatus (Corn snake), this protein is Protein E4.2.